The sequence spans 1021 residues: Translation initiation factor IF-2 (1021 aa).

The interval 50–422 (AFPAEGGSAS…RMGAMVPRGN (373 aa)) is disordered. The span at 57–71 (SASGGRPGGRPGPGN) shows a compositional bias: gly residues. The segment covering 75–95 (PAPPRPGLAPRPGPRPVPGRP) has biased composition (pro residues). Residues 96–112 (GPAARPGGPAAPSAPAA) show a composition bias toward low complexity. Over residues 113–129 (PSAPAPGAPAASPPASQ) the composition is skewed to pro residues. 3 stretches are compositionally biased toward low complexity: residues 130-159 (PRPI…ASGP), 167-178 (GGPAAPGRARPG), and 187-196 (SAPSAPSAGG). A compositionally biased stretch (pro residues) spans 198–208 (RPGPRPGPRPS). Low complexity predominate over residues 219–233 (SAGPRQSAGQSGSGP). 2 stretches are compositionally biased toward pro residues: residues 234-254 (ASPP…PRPG) and 262-273 (RPSPGSMPPRPG). 2 stretches are compositionally biased toward gly residues: residues 275 to 291 (RPGG…GSGG) and 306 to 389 (GAPG…GGRG). A compositionally biased stretch (basic residues) spans 390-401 (RPGRQRKSKRAK). Residues 514–686 (IRPPVVTVMG…IILTADASLD (173 aa)) enclose the tr-type G domain. The G1 stretch occupies residues 523-530 (GHVDHGKT). 523-530 (GHVDHGKT) provides a ligand contact to GTP. Residues 548–552 (GITQH) are G2. A G3 region spans residues 573-576 (DTPG). GTP contacts are provided by residues 573 to 577 (DTPGH) and 627 to 630 (NKVD). Positions 627-630 (NKVD) are G4. The interval 663 to 665 (SAR) is G5.

This sequence belongs to the TRAFAC class translation factor GTPase superfamily. Classic translation factor GTPase family. IF-2 subfamily.

It is found in the cytoplasm. Functionally, one of the essential components for the initiation of protein synthesis. Protects formylmethionyl-tRNA from spontaneous hydrolysis and promotes its binding to the 30S ribosomal subunits. Also involved in the hydrolysis of GTP during the formation of the 70S ribosomal complex. This is Translation initiation factor IF-2 from Frankia alni (strain DSM 45986 / CECT 9034 / ACN14a).